Reading from the N-terminus, the 145-residue chain is Photosystem I reaction center subunit XI (145 aa).

3 consecutive transmembrane segments (helical) span residues 48-68, 75-95, and 125-145; these read LEIG…LGPL, LLVG…GLTI, and IGAF…SFFA.

This sequence belongs to the PsaL family.

The protein localises to the plastid. Its subcellular location is the chloroplast thylakoid membrane. In Emiliania huxleyi (Coccolithophore), this protein is Photosystem I reaction center subunit XI.